We begin with the raw amino-acid sequence, 241 residues long: B-cell receptor-associated protein 29 (241 aa).

At 1-6 the chain is on the lumenal side; that stretch reads MTLQWA. Residues 7–27 traverse the membrane as a helical segment; it reads AVATFLYAEIGLILIFCLPFI. Residues 28-43 are Cytoplasmic-facing; the sequence is PPQRWQKIFSFNVWGK. The chain crosses the membrane as a helical span at residues 44–64; it reads IATFWNKAFLTIIILLIVLFL. Topologically, residues 65-103 are lumenal; it reads DAVREVRKYSSVHTIEKSSTSRPDAYEHTQMKLFRSQRN. The helical transmembrane segment at 104 to 124 threads the bilayer; that stretch reads LYISGFSLFFWLVLRRLVTLI. Residues 125-241 are Cytoplasmic-facing; that stretch reads TQLAKELSNK…RLERGNKKRL (117 aa). The stretch at 166–233 forms a coiled coil; that stretch reads GKDEECVLEA…KEHSELQDRL (68 aa). The interval 193–223 is disordered; sequence KTSDALSKAQNDVMEMKMQSERLSKEYDQLL. The span at 206–223 shows a compositional bias: basic and acidic residues; the sequence is MEMKMQSERLSKEYDQLL. Positions 238–241 match the Di-lysine motif motif; sequence KKRL.

Belongs to the BCAP29/BCAP31 family. In terms of assembly, homodimer and heterodimer with BCAP31. Binds CASP8 as a complex containing BCAP31, BCAP29, BCL2 and/or BCL2L1. Interacts with VAMP3, VAMP1 and membrane IgD immunoglobulins. May interact with ACTG1 and non-muscle myosin II.

Its subcellular location is the endoplasmic reticulum membrane. Its function is as follows. May play a role in anterograde transport of membrane proteins from the endoplasmic reticulum to the Golgi. May be involved in CASP8-mediated apoptosis. The polypeptide is B-cell receptor-associated protein 29 (BCAP29) (Pongo abelii (Sumatran orangutan)).